We begin with the raw amino-acid sequence, 332 residues long: Stage II sporulation protein B (332 aa).

Over residues 1 to 10 (MKKRKNKKNS) the composition is skewed to basic residues. Residues 1 to 71 (MKKRKNKKNS…EHPDEDEFNW (71 aa)) are disordered. The span at 11–27 (KAAEKALKVTINGKEET) shows a compositional bias: basic and acidic residues. A helical transmembrane segment spans residues 112 to 132 (AATIAFAAVIGTGLGLFALNI). The disordered stretch occupies residues 139–174 (SAPASLEDSLGSQTAKAGDTSADKQTSGAEKQAAQT). Polar residues predominate over residues 161–174 (DKQTSGAEKQAAQT). Residues 175 to 250 (EGTYKTYAVQ…SDFEAWGGKE (76 aa)) form the SPOR domain.

Its subcellular location is the cell membrane. With respect to regulation, appears to be degraded early in engulfment, in correlation with its loss from polar septa. Facilitates the rapid and spatially regulated dissolution of septal peptidoglycan. The protein is Stage II sporulation protein B of Bacillus subtilis (strain 168).